A 356-amino-acid chain; its full sequence is Histidinol-phosphate aminotransferase (356 aa).

Lys-211 carries the post-translational modification N6-(pyridoxal phosphate)lysine.

It belongs to the class-II pyridoxal-phosphate-dependent aminotransferase family. Histidinol-phosphate aminotransferase subfamily. Homodimer. Pyridoxal 5'-phosphate is required as a cofactor.

The enzyme catalyses L-histidinol phosphate + 2-oxoglutarate = 3-(imidazol-4-yl)-2-oxopropyl phosphate + L-glutamate. The protein operates within amino-acid biosynthesis; L-histidine biosynthesis; L-histidine from 5-phospho-alpha-D-ribose 1-diphosphate: step 7/9. The protein is Histidinol-phosphate aminotransferase of Blochmanniella floridana.